The chain runs to 61 residues: Alpha-conotoxin PnIB (61 aa).

The N-terminal stretch at 1 to 21 (MGMRMMFTVFLLVVLATTVVS) is a signal peptide. Residues 22-44 (FTSDRASDDGNAAASDLIALTIK) constitute a propeptide that is removed on maturation. 2 disulfides stabilise this stretch: cysteine 46-cysteine 52 and cysteine 47-cysteine 60. The ser-Xaa-Pro motif, crucial for potent interaction with nAChR stretch occupies residues 48–50 (SLP). Tyrosine 59 is modified (sulfotyrosine). Cysteine 60 is modified (cysteine amide).

Belongs to the conotoxin A superfamily. In terms of tissue distribution, expressed by the venom duct.

The protein localises to the secreted. Its function is as follows. Alpha-conotoxins act on postsynaptic membranes, they bind to the nicotinic acetylcholine receptors (nAChR) and thus inhibit them. This toxin blocks mammalian nAChRs (alpha-7/CHRNA7 &gt; alpha-3-beta-2/CHRNA3-CHRNB2). The chain is Alpha-conotoxin PnIB from Conus pennaceus (Feathered cone).